A 338-amino-acid chain; its full sequence is Heat-inducible transcription repressor HrcA (338 aa).

It belongs to the HrcA family.

Functionally, negative regulator of class I heat shock genes (grpE-dnaK-dnaJ and groELS operons). Prevents heat-shock induction of these operons. The protein is Heat-inducible transcription repressor HrcA of Streptomyces avermitilis (strain ATCC 31267 / DSM 46492 / JCM 5070 / NBRC 14893 / NCIMB 12804 / NRRL 8165 / MA-4680).